A 418-amino-acid chain; its full sequence is Putative F-box protein At1g20795 (418 aa).

Positions 1–46 (METLGLPLPLFEKILFRLDPISLVMMKCTRRSFNSHISEDPYFKSK) constitute an F-box domain.

In Arabidopsis thaliana (Mouse-ear cress), this protein is Putative F-box protein At1g20795.